We begin with the raw amino-acid sequence, 113 residues long: Na(+)/H(+) antiporter subunit C1 (113 aa).

3 consecutive transmembrane segments (helical) span residues 1-21 (MEII…YLVL), 28-48 (IVMG…TMGG), and 72-92 (LILT…VLAF).

This sequence belongs to the CPA3 antiporters (TC 2.A.63) subunit C family. In terms of assembly, may form a heterooligomeric complex that consists of seven subunits: mnhA1, mnhB1, mnhC1, mnhD1, mnhE1, mnhF1 and mnhG1.

Its subcellular location is the cell membrane. Mnh complex is a Na(+)/H(+) antiporter involved in Na(+) excretion. This is Na(+)/H(+) antiporter subunit C1 (mnhC1) from Staphylococcus haemolyticus (strain JCSC1435).